The following is a 357-amino-acid chain: Homoserine kinase (357 aa).

This sequence belongs to the GHMP kinase family. Homoserine kinase subfamily.

It catalyses the reaction L-homoserine + ATP = O-phospho-L-homoserine + ADP + H(+). Its pathway is amino-acid biosynthesis; L-threonine biosynthesis; L-threonine from L-aspartate: step 4/5. Functionally, commits homoserine to the threonine biosynthesis pathway by catalyzing its O-phosphorylation. In Cryptococcus neoformans var. grubii serotype A (strain H99 / ATCC 208821 / CBS 10515 / FGSC 9487) (Filobasidiella neoformans var. grubii), this protein is Homoserine kinase.